Here is a 130-residue protein sequence, read N- to C-terminus: MSAKLSTNSKKKIKRNIGEGNVYIQATFNNTIVTVSDIKGNALAWASAGGMGFKGAKKSTPYAAQITAESALNKVRDFGINYVHVYIKGPGIGRESAIRAIGSIGMTVKSISDITPIPHNGCRPKKTRRV.

The protein belongs to the universal ribosomal protein uS11 family. Part of the 30S ribosomal subunit. Interacts with proteins S7 and S18. Binds to IF-3.

Its function is as follows. Located on the platform of the 30S subunit, it bridges several disparate RNA helices of the 16S rRNA. Forms part of the Shine-Dalgarno cleft in the 70S ribosome. In Borreliella afzelii (strain PKo) (Borrelia afzelii), this protein is Small ribosomal subunit protein uS11.